Consider the following 1733-residue polypeptide: Gag-Pol polyprotein (1733 aa).

The N-myristoyl glycine; by host moiety is linked to residue Gly-2. The short motif at 109-112 is the PTAP/PSAP motif element; sequence PSAP. Residues 112-121 show a composition bias toward pro residues; sequence PSLLPEPPLS. 2 disordered regions span residues 112-196 and 202-221; these read PSLL…ASRL and LPVA…GGNG. The LYPX(n)L motif motif lies at 128 to 132; that stretch reads LYPAL. Residues 159–170 show a composition bias toward pro residues; it reads DPPPYRDPGPPP. The short motif at 160–163 is the PPXY motif element; sequence PPPY. Residue Ser-190 is modified to Phosphoserine; by host. The interval 343–391 is interaction with host PIAS4; that stretch reads GRSPTNLAKVKGITQGPNESPSAFLERLKEAYRRYTPYDPEDPGQETNV. Residues 428 to 433 are interaction with host UBE2I; that stretch reads IFNKRE. Composition is skewed to basic and acidic residues over residues 432 to 464 and 484 to 496; these read RETP…EKER and KQDR…RRPQ. Disordered regions lie at residues 432–496 and 511–550; these read RETP…RRPQ and WAKD…EPRI. A coiled-coil region spans residues 436 to 476; it reads EEREERIKRETEEKEERRRAEDEQKEKERDRRRHREMSKLL. The segment at 500 to 517 adopts a CCHC-type zinc-finger fold; sequence DQCAYCKEKGHWAKDCPK. Residues 559 to 629 form the Peptidase A2 domain; sequence VTFLVDTGAQ…CPYPLLGRDL (71 aa). The active-site Protease; shared with dimeric partner is the Asp-564. Positions 739 to 930 constitute a Reverse transcriptase domain; it reads LDQGILVPCQ…KQVKYLGYLL (192 aa). Positions 807, 881, 882, 1181, 1219, 1240, and 1310 each coordinate Mg(2+). Positions 1172–1318 constitute an RNase H type-1 domain; the sequence is PDADHTWYTD…ADQAAREVAT (147 aa). An HHCC-type zinc finger spans residues 1385 to 1425; it reads HQLTHLSFSKTKALLERSPSPYYMLNRDRTLKNITETCKAC. Positions 1442–1600 constitute an Integrase catalytic domain; sequence RGHRPGTHWE…TPYEILYGAP (159 aa). Positions 1453 and 1512 each coordinate Mg(2+).

Homohexamer; further associates as homomultimer. The virus core is composed of a lattice formed from hexagonal rings, each containing six capsid monomers. Interacts with mouse UBE2I and mouse PIAS4. As to quaternary structure, interacts (via PPXY motif) with host NEDD4. Interacts (via PSAP motif) with host TSG101. Interacts (via LYPX(n)L motif) with host PDCD6IP. In terms of assembly, the reverse transcriptase is a monomer (Potential). Interacts (via RNase domains) with host release factor ETF1; this interaction is essential for translational readthrough of amber codon between viral gag and pol genes, as well as for viral replication. Homodimer. Mg(2+) is required as a cofactor. In terms of processing, ubiquitinated by ITCH. Gag can recruit the ubiquitin ligase Itch in an L domain-independent manner to facilitate virus release via a mechanism that involves Gag ubiquitination. Specific enzymatic cleavages by the viral protease yield mature proteins. The protease is released by autocatalytic cleavage. The polyprotein is cleaved during and after budding, this process is termed maturation. Post-translationally, sumoylated; which is required for virus replication. In terms of processing, phosphorylated on serine residues.

It localises to the virion. It is found in the host cell membrane. The protein resides in the host late endosome membrane. Its subcellular location is the host endosome. The protein localises to the host multivesicular body. It localises to the host cytoplasm. It catalyses the reaction DNA(n) + a 2'-deoxyribonucleoside 5'-triphosphate = DNA(n+1) + diphosphate. The enzyme catalyses Endonucleolytic cleavage to 5'-phosphomonoester.. With respect to regulation, most efficiently inhibited by Amprenavir, which is able to block Gag-Pol processing in infected cells. Functionally, plays a role in budding and is processed by the viral protease during virion maturation outside the cell. During budding, it recruits, in a PPXY-dependent or independent manner, Nedd4-like ubiquitin ligases that conjugate ubiquitin molecules to Gag-Pol, or to Gag-Pol binding host factors. Interaction with HECT ubiquitin ligases probably links the viral protein to the host ESCRT pathway and facilitates release. Its function is as follows. Targets Gag and gag-pol polyproteins to the plasma membrane via a multipartite membrane binding signal, that includes its myristoylated N-terminus. Also mediates nuclear localization of the pre-integration complex. Constituent of the pre-integration complex (PIC) which tethers the latter to mitotic chromosomes. This allows the integration of the viral genome into the host DNA. In terms of biological role, forms the spherical core of the virion that encapsulates the genomic RNA-nucleocapsid complex. Functionally, involved in the packaging and encapsidation of two copies of the genome. Binds with high affinity to conserved UCUG elements within the packaging signal, located near the 5'-end of the genome. This binding is dependent on genome dimerization. Acts as a nucleic acid chaperone which is involved in rearrangement of nucleic acid secondary structures during gRNA retrotranscription. Its function is as follows. The aspartyl protease mediates proteolytic cleavages of Gag and Gag-Pol polyproteins during or shortly after the release of the virion from the plasma membrane. Cleavages take place as an ordered, step-wise cascade to yield mature proteins. This process is called maturation. Displays maximal activity during the budding process just prior to particle release from the cell (Potential). Cleaves the translation initiation factor eIF4G leading to the inhibition of host cap-dependent translation. RT is a multifunctional enzyme that converts the viral dimeric RNA genome into dsDNA in the cytoplasm, shortly after virus entry into the cell. This enzyme displays a DNA polymerase activity that can copy either DNA or RNA templates, and a ribonuclease H (RNase H) activity that cleaves the RNA strand of RNA-DNA heteroduplexes in a partially processive 3' to 5' endonucleasic mode. Conversion of viral genomic RNA into dsDNA requires many steps. A tRNA binds to the primer-binding site (PBS) situated at the 5' end of the viral RNA. RT uses the 3' end of the tRNA primer to perform a short round of RNA-dependent minus-strand DNA synthesis. The reading proceeds through the U5 region and ends after the repeated (R) region which is present at both ends of viral RNA. The portion of the RNA-DNA heteroduplex is digested by the RNase H, resulting in a ssDNA product attached to the tRNA primer. This ssDNA/tRNA hybridizes with the identical R region situated at the 3' end of viral RNA. This template exchange, known as minus-strand DNA strong stop transfer, can be either intra- or intermolecular. RT uses the 3' end of this newly synthesized short ssDNA to perform the RNA-dependent minus-strand DNA synthesis of the whole template. RNase H digests the RNA template except for a polypurine tract (PPT) situated at the 5' end of the genome. It is not clear if both polymerase and RNase H activities are simultaneous. RNase H probably can proceed both in a polymerase-dependent (RNA cut into small fragments by the same RT performing DNA synthesis) and a polymerase-independent mode (cleavage of remaining RNA fragments by free RTs). Secondly, RT performs DNA-directed plus-strand DNA synthesis using the PPT that has not been removed by RNase H as primers. PPT and tRNA primers are then removed by RNase H. The 3' and 5' ssDNA PBS regions hybridize to form a circular dsDNA intermediate. Strand displacement synthesis by RT to the PBS and PPT ends produces a blunt ended, linear dsDNA copy of the viral genome that includes long terminal repeats (LTRs) at both ends. In terms of biological role, catalyzes viral DNA integration into the host chromosome, by performing a series of DNA cutting and joining reactions. This enzyme activity takes place after virion entry into a cell and reverse transcription of the RNA genome in dsDNA. The first step in the integration process is 3' processing. This step requires a complex comprising the viral genome, matrix protein and integrase. This complex is called the pre-integration complex (PIC). The integrase protein removes 2 nucleotides from each 3' end of the viral DNA, leaving recessed CA OH's at the 3' ends. In the second step that requires cell division, the PIC enters cell nucleus. In the third step, termed strand transfer, the integrase protein joins the previously processed 3' ends to the 5' ends of strands of target cellular DNA at the site of integration. The last step is viral DNA integration into host chromosome. This is Gag-Pol polyprotein (gag-pol) from Cas-Br-E murine leukemia virus.